The sequence spans 458 residues: MAKTNGFMGHDMLAPFTAAWMIDMGPLVIDKAEGSYVYGVNGKKYLDSLSGLWCTVLGGSEPRLIEAASKQLNKSAFYHSFWNRTTKPSLDLAKELINMFTANKMGKVFFTSSGSEANDTQVKLVWYYNNAIGRPNKKKIISRKNAYHGSTYMTAGLSGLPSLHLKFDLPPPYILHTDCPHYWNYHLPGETEEEYSTRLANNLENLILKEGPETVAAFIAEPVMGGAGVIIPPATYFEKIQAVLKKYDILFIADEVICGFGRLGTMFGCDKYNIKPDLVSIAKALSGGYIPIGAVLVSEEISKVIMSQSNQLGVFCHGFTYSGHPVACAVALEALKIYKEKNITEVVNKLSPKLQEGLKAFIDSPIIGEIRGTGLVLSTEFVDNKSPNDPFPPEWGVGTYFGSQCQKHGMLVSFSGDHVNMAPPFTLSLEELDEMISIYGKALKDTEKRVEELKSQKK.

114 to 115 (GS) lines the pyridoxal 5'-phosphate pocket. Tyr147 provides a ligand contact to substrate. Asp254 serves as a coordination point for pyridoxal 5'-phosphate. Lys283 is a binding site for substrate. Lys283 is subject to N6-(pyridoxal phosphate)lysine.

This sequence belongs to the class-III pyridoxal-phosphate-dependent aminotransferase family. Expressed in leaves, roots, stems, flowers and fruits. Expressed in carpels, but not in stamens.

It is found in the cytoplasm. It carries out the reaction 4-aminobutanoate + pyruvate = succinate semialdehyde + L-alanine. The catalysed reaction is 4-aminobutanoate + glyoxylate = succinate semialdehyde + glycine. In terms of biological role, transaminase that degrades gamma-amino butyric acid (GABA) and uses pyruvate or glyoxylate as amino-group acceptor. Cannot use beta-alanine, ornithine, acetylornithine, serine, glycine, asparagine, glutamine, glutamate, valine, leucine, isoleucine, methionine, phenylalanine, histidine, lysine, arginine, aspartate, threonine, tyrosine, tryptophan, proline, or cysteine as amino donors. May be responsible for establishing the GABA gradient in the carpel. The chain is Gamma aminobutyrate transaminase 2 (GABA-TP2) from Solanum lycopersicum (Tomato).